Reading from the N-terminus, the 1639-residue chain is Mediator of RNA polymerase II transcription subunit 14 (1639 aa).

An LXXLL motif 1 motif is present at residues 49–53 (LAELL). Disordered stretches follow at residues 561-586 (GQSP…GSDS) and 709-755 (LPQP…KTVH). The span at 575-586 (SAAGGPAPGSDS) shows a compositional bias: low complexity. The segment covering 711–721 (QPKPPQAPPTP) has biased composition (pro residues). The segment covering 722-748 (QQQQQQQQQQQQPGTSDAKSSGAGASA) has biased composition (low complexity). The short motif at 768 to 772 (LKRLL) is the LXXLL motif 2 element. Disordered regions lie at residues 1039–1243 (RRSQ…HHYT) and 1558–1639 (MQPG…GGPN). Gly residues-rich tracts occupy residues 1062–1088 (GNNG…GTGM) and 1122–1142 (IGGG…GQGG). The segment covering 1189–1201 (GPSSLSYMQSHTD) has biased composition (polar residues). The span at 1219 to 1229 (PGMPRPSPRPG) shows a compositional bias: pro residues. Residues 1558–1579 (MQPGGGPGVPGGPGGPMGGQIG) are compositionally biased toward gly residues. A compositionally biased stretch (low complexity) spans 1589 to 1603 (VGSSPSPMMHSPMQQ). Residues 1604-1639 (MGGGGPQPGAYGGMVGGPGGGPQSGGPVGGGPGGPN) are compositionally biased toward gly residues.

The protein belongs to the Mediator complex subunit 14 family. As to quaternary structure, component of the Mediator complex.

The protein localises to the nucleus. In terms of biological role, component of the Mediator complex, a coactivator involved in the regulated transcription of nearly all RNA polymerase II-dependent genes. Mediator functions as a bridge to convey information from gene-specific regulatory proteins to the basal RNA polymerase II transcription machinery. Mediator is recruited to promoters by direct interactions with regulatory proteins and serves as a scaffold for the assembly of a functional preinitiation complex with RNA polymerase II and the general transcription factors. The sequence is that of Mediator of RNA polymerase II transcription subunit 14 (MED14) from Anopheles gambiae (African malaria mosquito).